The primary structure comprises 237 residues: Probable F-box protein At1g53815 (237 aa).

The 32-residue stretch at 41 to 72 (ISNILSRLPLKSKAKCRCVSKLWSSIIRRPNY) folds into the F-box domain.

In Arabidopsis thaliana (Mouse-ear cress), this protein is Probable F-box protein At1g53815.